The sequence spans 88 residues: Small ribosomal subunit protein uS15c (88 aa).

This sequence belongs to the universal ribosomal protein uS15 family. As to quaternary structure, part of the 30S ribosomal subunit.

The protein resides in the plastid. The protein localises to the chloroplast. This Cycas taitungensis (Prince sago) protein is Small ribosomal subunit protein uS15c (rps15).